A 312-amino-acid polypeptide reads, in one-letter code: tRNA dimethylallyltransferase (312 aa).

18-25 is an ATP binding site; sequence GPTASGKS. 20-25 is a substrate binding site; sequence TASGKS. 2 interaction with substrate tRNA regions span residues 43–46 and 167–171; these read DSMQ and QRILR.

The protein belongs to the IPP transferase family. Monomer. Mg(2+) is required as a cofactor.

The enzyme catalyses adenosine(37) in tRNA + dimethylallyl diphosphate = N(6)-dimethylallyladenosine(37) in tRNA + diphosphate. Its function is as follows. Catalyzes the transfer of a dimethylallyl group onto the adenine at position 37 in tRNAs that read codons beginning with uridine, leading to the formation of N6-(dimethylallyl)adenosine (i(6)A). This is tRNA dimethylallyltransferase from Azorhizobium caulinodans (strain ATCC 43989 / DSM 5975 / JCM 20966 / LMG 6465 / NBRC 14845 / NCIMB 13405 / ORS 571).